A 234-amino-acid polypeptide reads, in one-letter code: DNA repair protein RecO (234 aa).

The protein belongs to the RecO family.

Its function is as follows. Involved in DNA repair and RecF pathway recombination. The sequence is that of DNA repair protein RecO from Alteromonas mediterranea (strain DSM 17117 / CIP 110805 / LMG 28347 / Deep ecotype).